We begin with the raw amino-acid sequence, 456 residues long: Adenylosuccinate synthetase isozyme 2 (456 aa).

Residues 1 to 24 (MAFAETNPAASSLPNGDCGRPRAR) are disordered. Residues 39 to 45 (GDEGKGK) and 67 to 69 (GHT) contribute to the GTP site. Asp40 serves as the catalytic Proton acceptor. Mg(2+)-binding residues include Asp40 and Gly67. Residue Asp40 coordinates substrate. IMP contacts are provided by residues 40–43 (DEGK), 65–68 (NAGH), Thr162, Arg176, Asn255, Thr270, and Arg334. His68 serves as the catalytic Proton donor. 330–336 (VTTGRKR) provides a ligand contact to substrate. Residues Arg336, 362 to 364 (KLD), and 444 to 447 (GVGK) contribute to the GTP site.

This sequence belongs to the adenylosuccinate synthetase family. In terms of assembly, homodimer. The cofactor is Mg(2+). In terms of tissue distribution, widely expressed.

It localises to the cytoplasm. Its subcellular location is the mitochondrion. The catalysed reaction is IMP + L-aspartate + GTP = N(6)-(1,2-dicarboxyethyl)-AMP + GDP + phosphate + 2 H(+). Its pathway is purine metabolism; AMP biosynthesis via de novo pathway; AMP from IMP: step 1/2. Inhibited competitively by AMP and IMP and non-competitively by fructose 1,6-bisphosphate. Functionally, plays an important role in the de novo pathway and in the salvage pathway of purine nucleotide biosynthesis. Catalyzes the first committed step in the biosynthesis of AMP from IMP. This Sus scrofa (Pig) protein is Adenylosuccinate synthetase isozyme 2.